We begin with the raw amino-acid sequence, 440 residues long: NADH-quinone oxidoreductase subunit H (440 aa).

The next 9 helical transmembrane spans lie at 11–31 (VWLIIVKVVILFVILLAWTIF), 83–103 (IVFNLAPVIAGIACFASWSVI), 123–143 (VPVAVLFILAVASIGIYGVVL), 164–184 (MISYEVAMGLSLVTVFIFSGS), 207–227 (IAGHYWLLLIPSFVIYVITMF), 261–281 (FLAEYINMATLSAVCTTLFLG), 299–319 (WWGLLWFFLKTQLVIFFFVWV), 331–351 (FMDLGWKVLIPVSLGWVLLVA), and 366–386 (VFLVVVGVILVALIVWAFMGG).

This sequence belongs to the complex I subunit 1 family. NDH-1 is composed of 14 different subunits. Subunits NuoA, H, J, K, L, M, N constitute the membrane sector of the complex.

The protein localises to the cell membrane. It carries out the reaction a quinone + NADH + 5 H(+)(in) = a quinol + NAD(+) + 4 H(+)(out). Functionally, NDH-1 shuttles electrons from NADH, via FMN and iron-sulfur (Fe-S) centers, to quinones in the respiratory chain. The immediate electron acceptor for the enzyme in this species is believed to be ubiquinone. Couples the redox reaction to proton translocation (for every two electrons transferred, four hydrogen ions are translocated across the cytoplasmic membrane), and thus conserves the redox energy in a proton gradient. This subunit may bind ubiquinone. The sequence is that of NADH-quinone oxidoreductase subunit H from Cutibacterium acnes (strain DSM 16379 / KPA171202) (Propionibacterium acnes).